Reading from the N-terminus, the 193-residue chain is dTTP/UTP pyrophosphatase (193 aa).

The active-site Proton acceptor is aspartate 70.

It belongs to the Maf family. YhdE subfamily. A divalent metal cation is required as a cofactor.

It localises to the cytoplasm. It catalyses the reaction dTTP + H2O = dTMP + diphosphate + H(+). The enzyme catalyses UTP + H2O = UMP + diphosphate + H(+). Nucleoside triphosphate pyrophosphatase that hydrolyzes dTTP and UTP. May have a dual role in cell division arrest and in preventing the incorporation of modified nucleotides into cellular nucleic acids. This is dTTP/UTP pyrophosphatase from Alcanivorax borkumensis (strain ATCC 700651 / DSM 11573 / NCIMB 13689 / SK2).